A 502-amino-acid chain; its full sequence is Protein krueppel (502 aa).

Disordered regions lie at residues proline 115 to valine 164 and aspartate 178 to glycine 202. Composition is skewed to low complexity over residues threonine 119–leucine 136 and serine 183–serine 198. C2H2-type zinc fingers lie at residues phenylalanine 222–histidine 244, phenylalanine 250–histidine 272, tyrosine 278–histidine 300, tyrosine 306–histidine 328, and phenylalanine 334–cysteine 354. 2 disordered regions span residues asparagine 399–glycine 427 and arginine 445–histidine 502. Residues glutamate 410–glutamate 419 are compositionally biased toward acidic residues. Residues serine 468, serine 471, and serine 477 each carry the phosphoserine modification. Residues aspartate 482 to aspartate 491 show a composition bias toward acidic residues.

This sequence belongs to the krueppel C2H2-type zinc-finger protein family.

The protein resides in the nucleus. Krueppel is a gap class segmentation protein. It is involved in the segmentation of the embryo and in the differentiation of the Malpighian tubules. The protein is Protein krueppel (Kr) of Drosophila melanogaster (Fruit fly).